A 24-amino-acid chain; its full sequence is GFLDKLKKGASDFANALVNSIKGT.

Expressed by the skin glands.

The protein resides in the secreted. Very weak antimicrobial peptide since it does not show activity below 100 ug/ml against Bacillus cereus, Escherichia coli, Leuconostoc mesenteroides, Micrococcus luteus, Pastewella haemolytica, Staphylococcus aureus, Streptococcus faecalis and Streptococcus uberis. In Nyctimystes infrafrenatus (White-lipped tree frog), this protein is Frenatin-4.